The chain runs to 518 residues: Protein MGF 505-6R (518 aa).

ANK repeat units follow at residues 54–83 (SIND…NLHY), 129–158 (ECDF…LLNV), 261–290 (SVNR…IPRG), 292–322 (IERL…KVKN), and 324–351 (KKLV…NLVD).

Belongs to the asfivirus MGF 505 family.

Plays a role in virus cell tropism, and may be required for efficient virus replication in macrophages. The chain is Protein MGF 505-6R from Ornithodoros (relapsing fever ticks).